The sequence spans 219 residues: Dehydration-responsive element-binding protein 1E (219 aa).

A compositionally biased stretch (low complexity) spans 1-19 (MEWAYYGSGYSSSGTPSPV). Residues 1 to 44 (MEWAYYGSGYSSSGTPSPVGGDGDEDSYMTVSSAPPKRRAGRTK) are disordered. A DNA-binding region (AP2/ERF) is located at residues 52–109 (VYKGVRSRNPGRWVCEVREPHGKQRIWLGTFETAEMAARAHDVAAMALRGRAACLNFA).

This sequence belongs to the AP2/ERF transcription factor family. ERF subfamily.

The protein localises to the nucleus. Transcriptional activator that binds specifically to the DNA sequence 5'-[AG]CCGAC-3'. Binding to the C-repeat/DRE element mediates high salinity- and dehydration-inducible transcription. This Oryza sativa subsp. indica (Rice) protein is Dehydration-responsive element-binding protein 1E (DREB1E).